A 254-amino-acid chain; its full sequence is 5'/3'-nucleotidase SurE (254 aa).

A divalent metal cation is bound by residues aspartate 9, aspartate 10, serine 40, and asparagine 93.

This sequence belongs to the SurE nucleotidase family. A divalent metal cation is required as a cofactor.

It is found in the cytoplasm. The catalysed reaction is a ribonucleoside 5'-phosphate + H2O = a ribonucleoside + phosphate. It carries out the reaction a ribonucleoside 3'-phosphate + H2O = a ribonucleoside + phosphate. It catalyses the reaction [phosphate](n) + H2O = [phosphate](n-1) + phosphate + H(+). Nucleotidase with a broad substrate specificity as it can dephosphorylate various ribo- and deoxyribonucleoside 5'-monophosphates and ribonucleoside 3'-monophosphates with highest affinity to 3'-AMP. Also hydrolyzes polyphosphate (exopolyphosphatase activity) with the preference for short-chain-length substrates (P20-25). Might be involved in the regulation of dNTP and NTP pools, and in the turnover of 3'-mononucleotides produced by numerous intracellular RNases (T1, T2, and F) during the degradation of various RNAs. The sequence is that of 5'/3'-nucleotidase SurE from Yersinia pestis bv. Antiqua (strain Antiqua).